Here is a 676-residue protein sequence, read N- to C-terminus: Beta-taxilin (676 aa).

Disordered regions lie at residues 1-55 and 71-131; these read MEND…DISE and AASL…EQKL. 2 stretches are compositionally biased toward polar residues: residues 8 to 25 and 34 to 45; these read EKQQ…QGQS and QPLSPTNQTSAQ. Over residues 75–92 the composition is skewed to basic and acidic residues; the sequence is VEKEGTTAETDKPEKEDV. The segment covering 93 to 105 has biased composition (acidic residues); that stretch reads GSMEDAECEDVNE. Residues 106–131 show a composition bias toward basic and acidic residues; that stretch reads ESEKDKPAPGDASRAKEPSASKEQKL. Positions 157 to 461 form a coiled coil; the sequence is EEKLDLLFKK…LYRKIKQAQL (305 aa). The tract at residues 464-486 is disordered; the sequence is EVNGNDILEEDDDANTNPSSSEQ.

The protein belongs to the taxilin family. As to expression, specifically expressed in skeletal and cardiac muscle.

It localises to the cytoplasm. Promotes neurite-outgrowth. May be involved in intracellular vesicle traffic. This chain is Beta-taxilin (TXLNB), found in Gallus gallus (Chicken).